The chain runs to 558 residues: Polysialic acid transport protein KpsD (558 aa).

The N-terminal stretch at Met-1–Ala-20 is a signal peptide.

This sequence to E.coli K5 KpsD.

It localises to the periplasm. Its function is as follows. Involved in the translocation of the polysialic acid capsule across the outer membrane to the cell surface. May function as the periplasmic binding element of the PSA transport system, in which it transiently interacts with the membrane component of the transporter, binds polysaccharide and transports the polymer to a component in the outer membrane. The protein is Polysialic acid transport protein KpsD (kpsD) of Escherichia coli.